The chain runs to 1181 residues: Protein P1-P2 (1181 aa).

A signal peptide spans 1–33; the sequence is MASFLKPVNSQGLWLSLLLAITYLFLLPSAGQS. 4 helical membrane passes run 172-192, 194-214, 218-235, and 240-260; these read LIEF…VYVA, AVPG…WAWP, ASSL…IGFL, and IGLI…WSLL. The region spanning 318–515 is the Peptidase S39 domain; it reads IPGVQIKKLR…SSSPKFTGCE (198 aa). Active-site for protease activity residues include His366, Asp396, and Ser465. Residues 572–688 are disordered; sequence GLWADDTEDD…SCESSPHRPT (117 aa). 2 stretches are compositionally biased toward basic and acidic residues: residues 598-608 and 638-648; these read GETKSSEDPLP and EESRQPQEEKG. Residues 649-677 show a composition bias toward polar residues; that stretch reads QSCQEDSLNSTQEIQGQSTHFVPSSGTGR. In terms of domain architecture, RdRp catalytic spans 979–1094; that stretch reads RYLTPTDCSG…SVGSDLSQYA (116 aa).

It belongs to the luteoviruses RNA polymerase family. Post-translationally, specific enzymatic cleavages in vivo yield mature proteins. The protease probably cleaves itself and releases the RdRp (Potential). Cleavages have been shown in the P1 protein, but since the N-terminus containing the serine protease is shared between P1 and P1-P2, cleavages should also occur within the P1-P2 protein.

The protein resides in the membrane. The enzyme catalyses RNA(n) + a ribonucleoside 5'-triphosphate = RNA(n+1) + diphosphate. Its function is as follows. RNA-dependent RNA polymerase that plays an essential role in virus replication. This is Protein P1-P2 from Cicer arietinum (Chickpea).